Reading from the N-terminus, the 341-residue chain is tRNA N6-adenosine threonylcarbamoyltransferase (341 aa).

Fe cation-binding residues include His-111 and His-115. Substrate is bound by residues 134 to 138, Asp-167, Gly-180, and Asn-276; that span reads LVSGG. Asp-304 provides a ligand contact to Fe cation.

Belongs to the KAE1 / TsaD family. Fe(2+) is required as a cofactor.

The protein resides in the cytoplasm. It catalyses the reaction L-threonylcarbamoyladenylate + adenosine(37) in tRNA = N(6)-L-threonylcarbamoyladenosine(37) in tRNA + AMP + H(+). Functionally, required for the formation of a threonylcarbamoyl group on adenosine at position 37 (t(6)A37) in tRNAs that read codons beginning with adenine. Is involved in the transfer of the threonylcarbamoyl moiety of threonylcarbamoyl-AMP (TC-AMP) to the N6 group of A37, together with TsaE and TsaB. TsaD likely plays a direct catalytic role in this reaction. The polypeptide is tRNA N6-adenosine threonylcarbamoyltransferase (Pseudomonas paraeruginosa (strain DSM 24068 / PA7) (Pseudomonas aeruginosa (strain PA7))).